A 556-amino-acid chain; its full sequence is Arginine--tRNA ligase (556 aa).

The short motif at 132 to 142 (ANPTGDLHLGH) is the 'HIGH' region element.

It belongs to the class-I aminoacyl-tRNA synthetase family. As to quaternary structure, monomer.

The protein localises to the cytoplasm. It carries out the reaction tRNA(Arg) + L-arginine + ATP = L-arginyl-tRNA(Arg) + AMP + diphosphate. In Bacillus subtilis (strain 168), this protein is Arginine--tRNA ligase (argS).